A 222-amino-acid chain; its full sequence is Cyclin-dependent kinase inhibitor 3 (222 aa).

The disordered stretch occupies residues 68-101 (KPSSLIEPKQPPRVHRSGIKESGSRSRVDSVNSV). A compositionally biased stretch (basic and acidic residues) spans 85–95 (GIKESGSRSRV).

The protein belongs to the CDI family. ICK/KRP subfamily. In terms of assembly, specifically interacts with CDKA-1, but not with CDKB1-1.

The protein resides in the nucleus. Its subcellular location is the nucleoplasm. Its function is as follows. Binds and inhibits CYCD2-1/CDKA-1 complex kinase activity. May target specifically CDKA-1. The protein is Cyclin-dependent kinase inhibitor 3 (KRP3) of Arabidopsis thaliana (Mouse-ear cress).